The chain runs to 785 residues: Disintegrin and metalloproteinase domain-containing protein B (785 aa).

The N-terminal stretch at 1 to 26 (MRFLKSALPFVASALSLLSVQAAARS) is a signal peptide. The Extracellular portion of the chain corresponds to 27-703 (QEPSAIQHVS…GSWVEQHKNL (677 aa)). Residues 279-507 (KQVALVGIAA…NSVKSSCLSD (229 aa)) enclose the Peptidase M12B domain. N-linked (GlcNAc...) asparagine glycosylation is found at asparagine 322, asparagine 329, and asparagine 355. Intrachain disulfides connect cysteine 398–cysteine 492 and cysteine 446–cysteine 464. Histidine 429 provides a ligand contact to Zn(2+). The active site involves glutamate 430. Residues histidine 433 and histidine 439 each coordinate Zn(2+). The 90-residue stretch at 516-605 (GSQCGNGIVE…TCPADSFKKD (90 aa)) folds into the Disintegrin domain. 3 N-linked (GlcNAc...) asparagine glycosylation sites follow: asparagine 561, asparagine 593, and asparagine 640. A disulfide bridge connects residues cysteine 577 and cysteine 597. Residues 704-724 (VIGVACGVGGLLVLSILWCMI) traverse the membrane as a helical segment. Topologically, residues 725-785 (NRCRRARTVV…GPYQSATRYA (61 aa)) are cytoplasmic. A disordered region spans residues 737–785 (PPMRPWPGPMPPPPPQMGQWAGPNRGYQGLRAEPPPPYPGPYQSATRYA). A compositionally biased stretch (pro residues) spans 739 to 752 (MRPWPGPMPPPPPQ).

It depends on Zn(2+) as a cofactor.

It is found in the membrane. In terms of biological role, probable zinc protease. In Aspergillus fumigatus (strain ATCC MYA-4609 / CBS 101355 / FGSC A1100 / Af293) (Neosartorya fumigata), this protein is Disintegrin and metalloproteinase domain-containing protein B (ADM-B).